A 399-amino-acid chain; its full sequence is Acetate kinase (399 aa).

Position 10 (Asn-10) interacts with Mg(2+). Lys-17 is a binding site for ATP. Arg-91 contacts substrate. Asp-148 functions as the Proton donor/acceptor in the catalytic mechanism. ATP contacts are provided by residues 208-212, 283-285, and 331-335; these read HLGNG, DCR, and GIGEN. Glu-385 lines the Mg(2+) pocket.

This sequence belongs to the acetokinase family. In terms of assembly, homodimer. Requires Mg(2+) as cofactor. The cofactor is Mn(2+).

The protein localises to the cytoplasm. It catalyses the reaction acetate + ATP = acetyl phosphate + ADP. The protein operates within metabolic intermediate biosynthesis; acetyl-CoA biosynthesis; acetyl-CoA from acetate: step 1/2. Functionally, catalyzes the formation of acetyl phosphate from acetate and ATP. Can also catalyze the reverse reaction. This is Acetate kinase from Shewanella sp. (strain MR-4).